The sequence spans 232 residues: ATP-dependent Clp protease proteolytic subunit 2 (232 aa).

The active-site Nucleophile is the S124. Residue H149 is part of the active site.

It belongs to the peptidase S14 family. In terms of assembly, fourteen ClpP subunits assemble into 2 heptameric rings which stack back to back to give a disk-like structure with a central cavity, resembling the structure of eukaryotic proteasomes.

It localises to the cytoplasm. It catalyses the reaction Hydrolysis of proteins to small peptides in the presence of ATP and magnesium. alpha-casein is the usual test substrate. In the absence of ATP, only oligopeptides shorter than five residues are hydrolyzed (such as succinyl-Leu-Tyr-|-NHMec, and Leu-Tyr-Leu-|-Tyr-Trp, in which cleavage of the -Tyr-|-Leu- and -Tyr-|-Trp bonds also occurs).. Its function is as follows. Cleaves peptides in various proteins in a process that requires ATP hydrolysis. Has a chymotrypsin-like activity. Plays a major role in the degradation of misfolded proteins. This is ATP-dependent Clp protease proteolytic subunit 2 from Nostoc sp. (strain PCC 7120 / SAG 25.82 / UTEX 2576).